Consider the following 208-residue polypeptide: Interferon epsilon (208 aa).

An N-terminal signal peptide occupies residues 1–21; it reads MIIKHFFGTVLVLLASTTIFS. C53 and C163 are oxidised to a cystine. 2 N-linked (GlcNAc...) asparagine glycosylation sites follow: N95 and N104.

The protein belongs to the alpha/beta interferon family. In terms of tissue distribution, endometrium-specific.

It is found in the secreted. Type I interferon required for maintaining basal levels of IFN-regulated genes, including 2'-5'-oligoadenylate synthetase, IRF7 and ISG15, in the female reproductive tract. Directly mediates protection against viral and bacterial genital infections. This Homo sapiens (Human) protein is Interferon epsilon (IFNE).